The primary structure comprises 202 residues: Matrix protein (202 aa).

The PPXY motif motif lies at Pro-35–Tyr-38. Residues Lys-115–Val-151 are essential for glycoprotein binding.

Belongs to the lyssavirus matrix protein family. Homomultimer. Interacts with nucleoprotein and with the cytoplasmic domain of glycoprotein.

It is found in the virion membrane. It localises to the host endomembrane system. Functionally, plays a major role in assembly and budding of virion. Completely covers the ribonucleoprotein coil and keep it in condensed bullet-shaped form. Inhibits viral transcription and stimulates replication. Plays a major role in early induction of TRAIL-mediated apoptosis in infected neurons. The polypeptide is Matrix protein (M) (Irkut virus (IRKV)).